A 260-amino-acid polypeptide reads, in one-letter code: Electron transfer flavoprotein subunit beta (260 aa).

This sequence belongs to the ETF beta-subunit/FixA family. Heterodimer of an alpha and a beta subunit. It depends on FAD as a cofactor. Requires AMP as cofactor.

The electron transfer flavoprotein serves as a specific electron acceptor for other dehydrogenases. It transfers the electrons to the main respiratory chain via ETF-ubiquinone oxidoreductase (ETF dehydrogenase). This Thermoanaerobacterium thermosaccharolyticum (strain ATCC 7956 / DSM 571 / NCIMB 9385 / NCA 3814 / NCTC 13789 / WDCM 00135 / 2032) (Clostridium thermosaccharolyticum) protein is Electron transfer flavoprotein subunit beta (etfB).